The chain runs to 158 residues: 6,7-dimethyl-8-ribityllumazine synthase (158 aa).

5-amino-6-(D-ribitylamino)uracil contacts are provided by residues Phe22, 57-59 (AVE), and 81-83 (AVI). 86-87 (GT) is a (2S)-2-hydroxy-3-oxobutyl phosphate binding site. His89 functions as the Proton donor in the catalytic mechanism. Phe114 lines the 5-amino-6-(D-ribitylamino)uracil pocket. Arg128 is a binding site for (2S)-2-hydroxy-3-oxobutyl phosphate.

The protein belongs to the DMRL synthase family. Forms an icosahedral capsid composed of 60 subunits, arranged as a dodecamer of pentamers.

It catalyses the reaction (2S)-2-hydroxy-3-oxobutyl phosphate + 5-amino-6-(D-ribitylamino)uracil = 6,7-dimethyl-8-(1-D-ribityl)lumazine + phosphate + 2 H2O + H(+). It functions in the pathway cofactor biosynthesis; riboflavin biosynthesis; riboflavin from 2-hydroxy-3-oxobutyl phosphate and 5-amino-6-(D-ribitylamino)uracil: step 1/2. Functionally, catalyzes the formation of 6,7-dimethyl-8-ribityllumazine by condensation of 5-amino-6-(D-ribitylamino)uracil with 3,4-dihydroxy-2-butanone 4-phosphate. This is the penultimate step in the biosynthesis of riboflavin. The protein is 6,7-dimethyl-8-ribityllumazine synthase of Shewanella frigidimarina (strain NCIMB 400).